Consider the following 721-residue polypeptide: Polyribonucleotide nucleotidyltransferase (721 aa).

Mg(2+) contacts are provided by Asp495 and Asp501. The KH domain maps to 562-621 (PRLLSFRIDPELIGTVIGPGGRTIKGITERTNTKIDIEDGGIVTIASHDGAAAEEAQKII). The S1 motif domain maps to 631–699 (GEIFSGVVTR…SRGRINLTLR (69 aa)). Positions 701 to 721 (VGQNNGMSYPEPTPTPVAPLN) are disordered. Residues 711-721 (EPTPTPVAPLN) are compositionally biased toward pro residues.

It belongs to the polyribonucleotide nucleotidyltransferase family. Mg(2+) serves as cofactor.

It is found in the cytoplasm. The enzyme catalyses RNA(n+1) + phosphate = RNA(n) + a ribonucleoside 5'-diphosphate. Its function is as follows. Involved in mRNA degradation. Catalyzes the phosphorolysis of single-stranded polyribonucleotides processively in the 3'- to 5'-direction. This chain is Polyribonucleotide nucleotidyltransferase, found in Prochlorococcus marinus (strain MIT 9215).